The primary structure comprises 445 residues: Inward rectifier potassium channel 4 (445 aa).

The Cytoplasmic portion of the chain corresponds to 1–55 (MHGHNRNGQAHVPRRKRRNRFVKKNGQCNVYFANLSNKSQRYMADIFTTCVDTRW). A helical transmembrane segment spans residues 56 to 80 (RYMLMIFSAAFLVSWLFFGLLFWWI). Over 81–119 (AFFHGDLEASPSVPAVGGPGGNGGESPNAPKPCIMHVNG) the chain is Extracellular. Positions 120-131 (FLGAFLFSVETQ) form an intramembrane region, helical; Pore-forming. Positions 132 to 138 (TTIGYGF) form an intramembrane region, pore-forming. The Selectivity filter signature appears at 133–138 (TIGYGF). Over 139–147 (RCVTEECPL) the chain is Extracellular. Residues 148–169 (AVIAVVVQSIVGCVIDSFMIGT) form a helical membrane-spanning segment. Topologically, residues 170-445 (IMAKMARPKK…NISYRRESRI (276 aa)) are cytoplasmic. A PDZ-binding motif is present at residues 443-445 (SRI).

It belongs to the inward rectifier-type potassium channel (TC 1.A.2.1) family. KCNJ4 subfamily. As to quaternary structure, homomultimeric and heteromultimeric association with KCNJ2 and KCNJ12. Interacts with DLG2 and DLG4. Associates, via its PDZ-recognition domain, with a complex containing LIN7A, LIN7B, LIN7C, DLG1, CASK and APBA1. Interacts with TAX1BP3. TAX1BP3 competes with LIN7 family members for KCNJ4 binding. Highly expressed in the forebrain, moderately in skeletal muscle. Im olfactory bulb, specifically expressed at the postsynaptic membrane of dendritic spines of granule cells.

The protein localises to the cell membrane. It is found in the postsynaptic cell membrane. It localises to the cytoplasmic vesicle membrane. It carries out the reaction K(+)(in) = K(+)(out). In terms of biological role, inward rectifier potassium channels are characterized by a greater tendency to allow potassium to flow into the cell rather than out of it. Their voltage dependence is regulated by the concentration of extracellular potassium; as external potassium is raised, the voltage range of the channel opening shifts to more positive voltages. The inward rectification is mainly due to the blockage of outward current by internal magnesium. Can be blocked by extracellular barium and cesium. This chain is Inward rectifier potassium channel 4 (Kcnj4), found in Mus musculus (Mouse).